A 296-amino-acid polypeptide reads, in one-letter code: Bifunctional protein FolD (296 aa).

NADP(+) contacts are provided by residues 166-168 (GRS), Ser-195, and Thr-236.

The protein belongs to the tetrahydrofolate dehydrogenase/cyclohydrolase family. Homodimer.

It catalyses the reaction (6R)-5,10-methylene-5,6,7,8-tetrahydrofolate + NADP(+) = (6R)-5,10-methenyltetrahydrofolate + NADPH. It carries out the reaction (6R)-5,10-methenyltetrahydrofolate + H2O = (6R)-10-formyltetrahydrofolate + H(+). It participates in one-carbon metabolism; tetrahydrofolate interconversion. In terms of biological role, catalyzes the oxidation of 5,10-methylenetetrahydrofolate to 5,10-methenyltetrahydrofolate and then the hydrolysis of 5,10-methenyltetrahydrofolate to 10-formyltetrahydrofolate. The sequence is that of Bifunctional protein FolD from Dehalococcoides mccartyi (strain ATCC BAA-2266 / KCTC 15142 / 195) (Dehalococcoides ethenogenes (strain 195)).